Consider the following 382-residue polypeptide: Proton extrusion protein PxcA (382 aa).

4 helical membrane-spanning segments follow: residues 156-176 (TLIS…VQQV), 257-277 (AVKN…VCVF), 305-325 (IILF…TVLL), and 340-360 (FILL…KYWI).

The protein belongs to the CemA family.

It localises to the cell inner membrane. In terms of biological role, required for H(+) efflux immediately after light irradiation to form a rapid H(+) concentration gradient across the thylakoid membranes. Together with PxcL, contributes to transient H(+) uptake following dark to light transition. The polypeptide is Proton extrusion protein PxcA (Synechococcus sp. (strain WH7803)).